We begin with the raw amino-acid sequence, 638 residues long: 1-deoxy-D-xylulose-5-phosphate synthase (638 aa).

Thiamine diphosphate is bound by residues His-72 and 113-115 (GHA). Asp-144 contributes to the Mg(2+) binding site. Thiamine diphosphate-binding positions include 145 to 146 (GA), Asn-174, Tyr-287, and Glu-370. Asn-174 is a binding site for Mg(2+).

Belongs to the transketolase family. DXPS subfamily. As to quaternary structure, homodimer. The cofactor is Mg(2+). Requires thiamine diphosphate as cofactor.

It catalyses the reaction D-glyceraldehyde 3-phosphate + pyruvate + H(+) = 1-deoxy-D-xylulose 5-phosphate + CO2. It participates in metabolic intermediate biosynthesis; 1-deoxy-D-xylulose 5-phosphate biosynthesis; 1-deoxy-D-xylulose 5-phosphate from D-glyceraldehyde 3-phosphate and pyruvate: step 1/1. Its function is as follows. Catalyzes the acyloin condensation reaction between C atoms 2 and 3 of pyruvate and glyceraldehyde 3-phosphate to yield 1-deoxy-D-xylulose-5-phosphate (DXP). The polypeptide is 1-deoxy-D-xylulose-5-phosphate synthase (Thermosynechococcus vestitus (strain NIES-2133 / IAM M-273 / BP-1)).